We begin with the raw amino-acid sequence, 471 residues long: Cysteine--tRNA ligase (471 aa).

Cys-29 is a Zn(2+) binding site. Positions 31–41 (PTVYNYIHIGN) match the 'HIGH' region motif. Zn(2+) is bound by residues Cys-209, His-234, and Glu-238. The 'KMSKS' region motif lies at 266–270 (KMSKS). An ATP-binding site is contributed by Lys-269.

It belongs to the class-I aminoacyl-tRNA synthetase family. Monomer. Zn(2+) is required as a cofactor.

The protein localises to the cytoplasm. The enzyme catalyses tRNA(Cys) + L-cysteine + ATP = L-cysteinyl-tRNA(Cys) + AMP + diphosphate. In Listeria welshimeri serovar 6b (strain ATCC 35897 / DSM 20650 / CCUG 15529 / CIP 8149 / NCTC 11857 / SLCC 5334 / V8), this protein is Cysteine--tRNA ligase.